The following is a 158-amino-acid chain: Hypoxanthine DNA glycosylase (158 aa).

Asn-39 is a catalytic residue.

It belongs to the uracil-DNA glycosylase (UDG) superfamily. Type 6 (HDG) family.

In terms of biological role, excises hypoxanthine, a deamination product of adenine, from double-stranded DNA. Acts on double-stranded DNA containing G/I, T/I, A/I and C/I base pairs, but not on single-stranded inosine-containing DNA. Also has minor xanthine DNA glycosylase activity. Lacks any detectable uracil-DNA glycosylase activity. This is Hypoxanthine DNA glycosylase from Methanosarcina barkeri (strain Fusaro / DSM 804).